The chain runs to 147 residues: Ubiquitin-conjugating enzyme E2 5A (147 aa).

Positions 1–15 are enriched in basic and acidic residues; that stretch reads MASKRIQKELKDLQK. Positions 1-24 are disordered; the sequence is MASKRIQKELKDLQKDPPTSCSAG. The region spanning 1–147 is the UBC core domain; it reads MASKRIQKEL…ARTWTQRYAM (147 aa). C85 (glycyl thioester intermediate) is an active-site residue.

It belongs to the ubiquitin-conjugating enzyme family.

It catalyses the reaction S-ubiquitinyl-[E1 ubiquitin-activating enzyme]-L-cysteine + [E2 ubiquitin-conjugating enzyme]-L-cysteine = [E1 ubiquitin-activating enzyme]-L-cysteine + S-ubiquitinyl-[E2 ubiquitin-conjugating enzyme]-L-cysteine.. It functions in the pathway protein modification; protein ubiquitination. In terms of biological role, E2 conjugating enzyme that associates with the E3 ubiquitin-protein ligase EL5 to mediate ubiquitination of target proteins. The sequence is that of Ubiquitin-conjugating enzyme E2 5A (UBC5A) from Oryza sativa subsp. japonica (Rice).